Here is a 194-residue protein sequence, read N- to C-terminus: dTTP/UTP pyrophosphatase (194 aa).

Catalysis depends on Asp66, which acts as the Proton acceptor.

This sequence belongs to the Maf family. YhdE subfamily. The cofactor is a divalent metal cation.

It is found in the cytoplasm. It carries out the reaction dTTP + H2O = dTMP + diphosphate + H(+). The catalysed reaction is UTP + H2O = UMP + diphosphate + H(+). Functionally, nucleoside triphosphate pyrophosphatase that hydrolyzes dTTP and UTP. May have a dual role in cell division arrest and in preventing the incorporation of modified nucleotides into cellular nucleic acids. The chain is dTTP/UTP pyrophosphatase from Anaeromyxobacter dehalogenans (strain 2CP-C).